A 197-amino-acid polypeptide reads, in one-letter code: Small ribosomal subunit protein uS4B (197 aa).

The S4 RNA-binding domain occupies 88–151; that stretch reads CRLDNIAYRI…RKNDEFADNF (64 aa).

Belongs to the universal ribosomal protein uS4 family. As to quaternary structure, part of the 30S ribosomal subunit. Contacts protein S5. The interaction surface between S4 and S5 is involved in control of translational fidelity.

In terms of biological role, one of the primary rRNA binding proteins, it binds directly to 16S rRNA where it nucleates assembly of the body of the 30S subunit. Functionally, with S5 and S12 plays an important role in translational accuracy. In Clostridium botulinum (strain Langeland / NCTC 10281 / Type F), this protein is Small ribosomal subunit protein uS4B.